Consider the following 68-residue polypeptide: Serine rich endogenous peptide 13 (68 aa).

The N-terminal stretch at 1 to 31 (MATKASNLVVFLLSLLLLFLLISFQVGVADA) is a signal peptide. The interval 33-68 (RNKRQGQEQRVDYDYPRPPTAPIYLPPSKSRKGKGP) is disordered. Over residues 37-47 (QGQEQRVDYDY) the composition is skewed to basic and acidic residues. Over residues 48-57 (PRPPTAPIYL) the composition is skewed to pro residues. An SCOOP motif motif is present at residues 54–68 (PIYLPPSKSRKGKGP). Positions 60–62 (SKS) match the SxS motif essential for MIK2 binding motif.

This sequence belongs to the serine rich endogenous peptide (SCOOP) phytocytokine family. In terms of assembly, interacts with MIK2 (via extracellular leucine-rich repeat domain); this interaction triggers the formation of complex between MIK2 and the BAK1/SERK3 and SERK4 coreceptors, and subsequent BAK1 activation by phosphorylation. As to expression, mostly expressed in stems and flowers and, to a lower extent, in seedlings shoots, roots, siliques, seeds and leaves.

The protein localises to the cell membrane. Its subcellular location is the secreted. The protein resides in the extracellular space. It is found in the apoplast. Functionally, brassicaceae-specific phytocytokine (plant endogenous peptide released into the apoplast) perceived by MIK2 in a BAK1/SERK3 and SERK4 coreceptors-dependent manner, that modulates various physiological and antimicrobial processes including growth prevention and reactive oxygen species (ROS) response regulation. Promotes the expression of immune-related marker genes (e.g. WRKY30, WRKY33 and CYP81F2) in a MIK2-dependent manner. Inhibits root growth and regulates root meristems. Prevents general growth and development. Exhibits antibacterial effects against Pseudomonas syringae pv. tomato DC3000, Ralstonia solanacearum, Bacillus subtilis and Agrobacterium tumefaciens, thus being an antimicrobial peptide (AMP). This chain is Serine rich endogenous peptide 13, found in Arabidopsis thaliana (Mouse-ear cress).